A 179-amino-acid chain; its full sequence is Oryzines biosynthesis cluster protein J (179 aa).

Residues 88–148 (YVDYHPGCEP…NHCWRNPSKT (61 aa)) form the Cupin type-2 domain.

Belongs to the oryJ family.

It functions in the pathway secondary metabolite biosynthesis. Functionally, part of the gene cluster that mediates the biosynthesis of oryzines, natural products with an unusual maleidride backbone. The two subunits of the fungal fatty acid synthase oryfasA and oryfasB probably form octenoic acid. This fatty acid is most likely activated by the acyl-CoA ligase oryP to give octenyl-CoA before the citrate synthase-like protein oryE catalyzes condensation with oxaloacetate to form tricarboxylic acid. The next steps of the pathways are conjectural, but a favorite possible route has been proposed, beginning with decarboxylation and concomitant dehydration by the decarboxylase oryM, followed by tautomerization, which may lead to the production of a diene intermediate. Reduction of this diene intermediate could give the known metabolite piliformic acid. On the pathway to oryzine B and oryzine A, however, hydroxylation of the diene by the alpha-ketoglutarate-dependent dioxygenase oryG and lactonisation by the lactonohydrolases oryH or oryL could give oryzine B directly. Finally, enoyl reduction by the dehydrogenase oryD would then convert oryzine B into oryzine A. This chain is Oryzines biosynthesis cluster protein J, found in Aspergillus oryzae (strain ATCC 42149 / RIB 40) (Yellow koji mold).